A 222-amino-acid polypeptide reads, in one-letter code: 7-cyano-7-deazaguanine synthase (222 aa).

11–21 (FSGGQDSTTCL) provides a ligand contact to ATP. 4 residues coordinate Zn(2+): Cys187, Cys195, Cys198, and Cys201.

It belongs to the QueC family. Requires Zn(2+) as cofactor.

The catalysed reaction is 7-carboxy-7-deazaguanine + NH4(+) + ATP = 7-cyano-7-deazaguanine + ADP + phosphate + H2O + H(+). It functions in the pathway purine metabolism; 7-cyano-7-deazaguanine biosynthesis. In terms of biological role, catalyzes the ATP-dependent conversion of 7-carboxy-7-deazaguanine (CDG) to 7-cyano-7-deazaguanine (preQ(0)). The polypeptide is 7-cyano-7-deazaguanine synthase (Actinobacillus pleuropneumoniae serotype 7 (strain AP76)).